The following is a 220-amino-acid chain: Miraculin (220 aa).

The first 29 residues, 1–29 (MKELTMLSLSFFFVSALLAAAANPLLSAA), serve as a signal peptide directing secretion. Asn71 carries N-linked (GlcNAc...) asparagine glycosylation. Disulfide bonds link Cys76–Cys121, Cys177–Cys188, and Cys181–Cys184. Asn215 carries N-linked (GlcNAc...) asparagine glycosylation.

The protein belongs to the protease inhibitor I3 (leguminous Kunitz-type inhibitor) family. Homotetramer; dimer of homodimer. Glycosylated; contains as much as 13,9% of sugars (glucosamine, mannose, galactose, xylose, and fucose). In terms of tissue distribution, expressed in fruit pulp after pollination. Not expressed in seeds, stems or leaves.

Functionally, miraculin has the property of modifying a sour taste into a sweet taste. This alteration of taste perception persists for many minutes. This chain is Miraculin, found in Synsepalum dulcificum (Miracle fruit).